A 365-amino-acid chain; its full sequence is Peptide chain release factor 2 (365 aa).

Residue Q252 is modified to N5-methylglutamine.

Belongs to the prokaryotic/mitochondrial release factor family. Post-translationally, methylated by PrmC. Methylation increases the termination efficiency of RF2.

The protein resides in the cytoplasm. Functionally, peptide chain release factor 2 directs the termination of translation in response to the peptide chain termination codons UGA and UAA. This chain is Peptide chain release factor 2, found in Aeromonas salmonicida (strain A449).